The primary structure comprises 204 residues: MDRVVLMLSVMSLGVSSQPITDGQRLFSIAVSRVQHLHLLAQRLFSDFESSLQTEEQRQLNKIFLQDFCNSDYIISPIDKHETQRSSVLKLLSISYRLVESWEFPSRSLSGGSAPRNQISPKLSELKTGIHLLIRANEDGAEIFPDSSALQLAPYGNYYQSLGTDESLRRTYELLACFKKDMHKVETYLTVAKCRLSPEANCTL.

Positions 1–17 are cleaved as a signal peptide; sequence MDRVVLMLSVMSLGVSS. Position 18 is a pyrrolidone carboxylic acid (Gln18). Position 36 (His36) interacts with Zn(2+). Cys69 and Cys177 are joined by a disulfide. Glu186 contributes to the Zn(2+) binding site. An intrachain disulfide couples Cys194 to Cys202.

The protein belongs to the somatotropin/prolactin family.

It is found in the secreted. In terms of biological role, growth hormone plays an important role in growth control and is involved in the regulation of several anabolic processes. Implicated as an osmoregulatory substance important for seawater adaptation. This Sparus aurata (Gilthead sea bream) protein is Somatotropin (gh).